Here is a 638-residue protein sequence, read N- to C-terminus: Voltage-gated potassium channel KCNC2 (638 aa).

Residues 1 to 229 are Cytoplasmic-facing; that stretch reads MGKIENNERV…EDPYSSRAAR (229 aa). Positions 47 to 75 are disordered; the sequence is LTAAGDKLQPLPPPLSPPPRPPPLSPVPS. Over residues 56–72 the composition is skewed to pro residues; the sequence is PLPPPLSPPPRPPPLSP. His-124, Cys-130, Cys-151, and Cys-152 together coordinate Zn(2+). The chain crosses the membrane as a helical span at residues 230-248; that stretch reads FIAFASLFFILVSITTFCL. Asn-259 and Asn-266 each carry an N-linked (GlcNAc...) asparagine glycan. A helical membrane pass occupies residues 284 to 303; sequence YVEGVCVVWFTFEFLVRIVF. Residues 304–314 lie on the Cytoplasmic side of the membrane; sequence SPNKLEFIKNL. Residues 315–337 form a helical membrane-spanning segment; that stretch reads LNIIDFVAILPFYLEVGLSGLSS. A helical; Voltage-sensor membrane pass occupies residues 346–368; the sequence is FLRVVRFVRILRIFKLTRHFVGL. Over 369 to 381 the chain is Cytoplasmic; the sequence is RVLGHTLRASTNE. The chain crosses the membrane as a helical span at residues 382–401; that stretch reads FLLLIIFLALGVLIFATMIY. K(+)-binding residues include Thr-437, Leu-438, Gly-439, and Tyr-440. The short motif at 437–442 is the Selectivity filter element; that stretch reads TLGYGD. Residues 451-473 form a helical membrane-spanning segment; that stretch reads MLVGALCALAGVLTIAMPVPVIV. Over 474-638 the chain is Cytoplasmic; that stretch reads NNFGMYYSLA…RSRSPIPSIL (165 aa). The segment at 538-572 is disordered; that stretch reads SVLSGDDSTGSEPPLSPPERLPIRRSSTRDKNRRG. The residue at position 564 (Ser-564) is a Phosphoserine; by PKA. At Ser-600 the chain carries Phosphoserine.

The protein belongs to the potassium channel family. C (Shaw) (TC 1.A.1.2) subfamily. Kv3.2/KCNC2 sub-subfamily. In terms of assembly, homotetramer and heterotetramer with other channel-forming alpha subunits, such as KCNC1. Interacts with KCNC1. Homotetramer or heterotetramer channel activity is regulated by association with modulating ancillary subunits such as KCNE1, KCNE2 and KCNE3, creating a functionally diverse range of channel complexes. Interacts with KCNE1, KCNE2 and KCNE3. In terms of processing, phosphorylated by PKA in cortical synaptosomes. cAMP-dependent phosphorylation inhibits channel activity. Histamine H2 receptor- and PKA-induced phosphorylation extends action potential spike duration, reduces action potential spike amplitude, sustains maximum firing frequency in hippocampal interneurons; also reduces the incidence of high-frequency oscillations in hippocampal CA3 pyramidal cell layers. Expressed in neurons of the visual cortex during postnatal development. Expressed in neurons of the globus pallidus at postnatal age day 7 (P7), onward. Expressed in thalamic relay neurons. Expressed in neurons in layer IV and deeper cortical layers of the neocortex. Expressed in hippocampal interneurons. Expressed in nonpyramidal interneurons in the basolateral amygdala. Expressed in retinal ganglion cells (at protein level). Widely expressed in the brain. Expressed in numerous thalamic relay neurons throughout the dorsal thalamus. Expressed in interneurons of the deep layers V-VI of the cerebral cortex, the CA1 and CA3 pyramidal and dentate gyrus (DG) granule cells of the hippocampus, in neurons of the caudate-putamen, globus pallidus and subthalamic nucleus. Also expressed in the optic layer of interior colliculus, the inferior colliculus, the red nucleus, the medial geniculate, the ventral lateral lemiscus, the reticulotegmental nucleus and in the deep cerebellar nuclei. Expressed in globus pallidus (GP) neurons.

It is found in the cell membrane. It localises to the membrane. The protein localises to the perikaryon. The protein resides in the cell projection. Its subcellular location is the axon. It is found in the synapse. It localises to the synaptosome. The protein localises to the dendrite. The protein resides in the postsynaptic cell membrane. Its subcellular location is the presynaptic cell membrane. It is found in the apical cell membrane. It localises to the basolateral cell membrane. It carries out the reaction K(+)(in) = K(+)(out). Its activity is regulated as follows. Inhibited by Stichodactyla helianthus peptide ShK. Inhibited by millimolar levels of tetraethylammonium (TEA). Contrary to other channels, inhibited only by millimolar levels of 4-aminopyridine (4-AP). Voltage-gated potassium channel that mediates transmembrane potassium transport in excitable membranes, primarily in the brain. Contributes to the regulation of the fast action potential repolarization and in sustained high-frequency firing in neurons of the central nervous system. Homotetramer channels mediate delayed-rectifier voltage-dependent potassium currents that activate rapidly at high-threshold voltages and inactivate slowly. Forms tetrameric channels through which potassium ions pass in accordance with their electrochemical gradient. The channel alternates between opened and closed conformations in response to the voltage difference across the membrane. Can form functional homotetrameric channels and heterotetrameric channels that contain variable proportions of KCNC1, and possibly other family members as well; channel properties depend on the type of alpha subunits that are part of the channel. Channel properties may be modulated either by the association with ancillary subunits, such as KCNE1, KCNE2 and KCNE3 or indirectly by nitric oxide (NO) through a cGMP- and PKG-mediated signaling cascade, slowing channel activation and deactivation of delayed rectifier potassium channels. Contributes to fire sustained trains of very brief action potentials at high frequency in retinal ganglion cells, thalamocortical and suprachiasmatic nucleus (SCN) neurons and in hippocampal and neocortical interneurons. Sustained maximal action potential firing frequency in inhibitory hippocampal interneurons is negatively modulated by histamine H2 receptor activation in a cAMP- and protein kinase (PKA) phosphorylation-dependent manner. Plays a role in maintaining the fidelity of synaptic transmission in neocortical GABAergic interneurons by generating action potential (AP) repolarization at nerve terminals, thus reducing spike-evoked calcium influx and GABA neurotransmitter release. Required for long-range synchronization of gamma oscillations over distance in the neocortex. Contributes to the modulation of the circadian rhythm of spontaneous action potential firing in suprachiasmatic nucleus (SCN) neurons in a light-dependent manner. The protein is Voltage-gated potassium channel KCNC2 of Rattus norvegicus (Rat).